The sequence spans 155 residues: MWSLRGLRLAAGHCFRLCERNVSSPLRLTRNTDLKRINGFCTKPQESPKAPTQSYRHRVPLHKPTDFEKKILLWSGRFKKEEEIPETISFEMLDAAKNKIRVKVSYLMIALTVAGCVYMVIEGKKAAKRHESLTSLNLERKARLREEAAMKAKAD.

Residues Arg-77–Lys-103 are required for proapoptotic activity. Residues Val-102–Ile-121 form a helical membrane-spanning segment.

The protein belongs to the UPF0389 family. As to quaternary structure, interacts with HSP90AB1; HSP90AB1 is essential for FAM162A mitochondrial localization and pro-apoptotic activity. Interacts with VDAC2; the interaction is probably involved in inducing mitochondrial permeability transition.

It localises to the mitochondrion membrane. Its function is as follows. Proposed to be involved in regulation of apoptosis; the exact mechanism may differ between cell types/tissues. May be involved in hypoxia-induced cell death of transformed cells implicating cytochrome C release and caspase activation (such as CASP9) and inducing mitochondrial permeability transition. May be involved in hypoxia-induced cell death of neuronal cells probably by promoting release of AIFM1 from mitochondria to cytoplasm and its translocation to the nucleus; however, the involvement of caspases has been reported conflictingly. This Rattus norvegicus (Rat) protein is Protein FAM162A (Fam162a).